Consider the following 218-residue polypeptide: Epoxyqueuosine reductase QueH (218 aa).

Positions 22, 23, 101, and 104 each coordinate [4Fe-4S] cluster. C184 and C186 are joined by a disulfide.

It belongs to the QueH family.

It carries out the reaction epoxyqueuosine(34) in tRNA + AH2 = queuosine(34) in tRNA + A + H2O. It functions in the pathway tRNA modification; tRNA-queuosine biosynthesis. In terms of biological role, catalyzes the conversion of epoxyqueuosine (oQ) to queuosine (Q), which is a hypermodified base found in the wobble positions of tRNA(Asp), tRNA(Asn), tRNA(His) and tRNA(Tyr). This chain is Epoxyqueuosine reductase QueH, found in Acinetobacter baylyi (strain ATCC 33305 / BD413 / ADP1).